Consider the following 112-residue polypeptide: cAMP-regulated phosphoprotein 19 (112 aa).

The residue at position 1 (methionine 1) is an N-acetylmethionine. Over residues 1 to 11 (MSAEVPEAASA) the composition is skewed to low complexity. The segment at 1 to 49 (MSAEVPEAASAEEQKEMEDKVTSPEKAEEAKLKARYPHLGQKPGGSDFL) is disordered. Serine 2 bears the N-acetylserine mark. Phosphoserine is present on residues serine 2 and serine 23. Over residues 12-32 (EEQKEMEDKVTSPEKAEEAKL) the composition is skewed to basic and acidic residues. Residues serine 62 and serine 104 each carry the phosphoserine; by GWL modification. The interval 72–112 (MKNKQLPTATPDKTEVTGDHIPTPQDLPQRKPSLVASKLAG) is disordered. The residue at position 104 (serine 104) is a Phosphoserine; by PKA. An N6-acetyllysine modification is found at lysine 109.

As to quaternary structure, interacts (when phosphorylated at Ser-62) with PPP2R2D. Interacts with SNCA. Interacts with PPP2R2A; the interaction is direct and this interaction inhibits PP2A activity. In terms of processing, phosphorylation at Ser-62 by MASTL/GWL during mitosis is essential for interaction with PPP2R2D (PR55-delta) and subsequent inactivation of PP2A. Phosphorylated by PKA. Isoform ARPP-19 is found in all brain regions and also present in non-neuronal tissues. Isoform ARPP-16 is enriched in the caudate nucleus, found in low levels in cerebral cortex.

The protein localises to the cytoplasm. Its function is as follows. Protein phosphatase inhibitor that specifically inhibits protein phosphatase 2A (PP2A) during mitosis. Inhibition of PP2A is enhanced when ARPP19 is phosphorylated. When phosphorylated at Ser-62 during mitosis, specifically interacts with PPP2R2D (PR55-delta) and inhibits its activity, leading to inactivation of PP2A, an essential condition to keep cyclin-B1-CDK1 activity high during M phase. May indirectly enhance GAP-43 expression. The protein is cAMP-regulated phosphoprotein 19 (ARPP19) of Bos taurus (Bovine).